The primary structure comprises 358 residues: MSVKLNLSSSILLILFAAAASKEIGFDESNPIKMVSDNLHELEDTVVQILGQSRHVLSFSRFTHRYGKKYQSVEEMKLRFSVFKENLDLIRSTNKKGLSYKLSLNQFADLTWQEFQRYKLGAAQNCSATLKGSHKITEATVPDTKDWREDGIVSPVKEQGHCGSCWTFSTTGALEAAYHQAFGKGISLSEQQLVDCAGTFNNFGCHGGLPSQAFEYIKYNGGLDTEEAYPYTGKDGGCKFSAKNIGVQVRDSVNITLGAEDELKHAVGLVRPVSVAFEVVHEFRFYKKGVFTSNTCGNTPMDVNHAVLAVGYGVEDDVPYWLIKNSWGGEWGDNGYFKMEMGKNMCGVATCSSYPVVA.

The N-terminal stretch at 1–21 is a signal peptide; that stretch reads MSVKLNLSSSILLILFAAAAS. The propeptide at 22 to 140 is activation peptide; it reads KEIGFDESNP…KGSHKITEAT (119 aa). N-linked (GlcNAc...) asparagine glycosylation occurs at asparagine 125. 2 cysteine pairs are disulfide-bonded: cysteine 162–cysteine 205 and cysteine 196–cysteine 238. Cysteine 165 is an active-site residue. N-linked (GlcNAc...) asparagine glycosylation is present at asparagine 254. The cysteines at positions 296 and 346 are disulfide-linked. Residues histidine 305 and asparagine 325 contribute to the active site.

This sequence belongs to the peptidase C1 family.

The protein localises to the vacuole. It carries out the reaction Hydrolysis of proteins, acting as an aminopeptidase (notably, cleaving Arg-|-Xaa bonds) as well as an endopeptidase.. In terms of biological role, may play a role in proteolysis leading to mobilization of nitrogen during senescence and starvation. This Arabidopsis thaliana (Mouse-ear cress) protein is Thiol protease aleurain-like.